A 340-amino-acid polypeptide reads, in one-letter code: Tetraacyldisaccharide 4'-kinase (340 aa).

Position 51–58 (51–58) interacts with ATP; the sequence is HMGGAGKT.

Belongs to the LpxK family.

The catalysed reaction is a lipid A disaccharide + ATP = a lipid IVA + ADP + H(+). It participates in glycolipid biosynthesis; lipid IV(A) biosynthesis; lipid IV(A) from (3R)-3-hydroxytetradecanoyl-[acyl-carrier-protein] and UDP-N-acetyl-alpha-D-glucosamine: step 6/6. In terms of biological role, transfers the gamma-phosphate of ATP to the 4'-position of a tetraacyldisaccharide 1-phosphate intermediate (termed DS-1-P) to form tetraacyldisaccharide 1,4'-bis-phosphate (lipid IVA). In Rhodopseudomonas palustris (strain TIE-1), this protein is Tetraacyldisaccharide 4'-kinase.